A 561-amino-acid polypeptide reads, in one-letter code: Arginine--tRNA ligase (561 aa).

The 'HIGH' region motif lies at 128–138 (ANPTGPLHVGH).

The protein belongs to the class-I aminoacyl-tRNA synthetase family. Monomer.

It is found in the cytoplasm. It catalyses the reaction tRNA(Arg) + L-arginine + ATP = L-arginyl-tRNA(Arg) + AMP + diphosphate. This Methylibium petroleiphilum (strain ATCC BAA-1232 / LMG 22953 / PM1) protein is Arginine--tRNA ligase.